A 120-amino-acid chain; its full sequence is NAD(P)H-quinone oxidoreductase subunit 3, chloroplastic (120 aa).

A run of 3 helical transmembrane segments spans residues 9–29 (IFWT…LISG), 64–84 (MFAL…PWAM), and 88–108 (VLGV…IVGS).

It belongs to the complex I subunit 3 family. As to quaternary structure, NDH is composed of at least 16 different subunits, 5 of which are encoded in the nucleus.

The protein localises to the plastid. It localises to the chloroplast thylakoid membrane. It carries out the reaction a plastoquinone + NADH + (n+1) H(+)(in) = a plastoquinol + NAD(+) + n H(+)(out). It catalyses the reaction a plastoquinone + NADPH + (n+1) H(+)(in) = a plastoquinol + NADP(+) + n H(+)(out). In terms of biological role, NDH shuttles electrons from NAD(P)H:plastoquinone, via FMN and iron-sulfur (Fe-S) centers, to quinones in the photosynthetic chain and possibly in a chloroplast respiratory chain. The immediate electron acceptor for the enzyme in this species is believed to be plastoquinone. Couples the redox reaction to proton translocation, and thus conserves the redox energy in a proton gradient. This Piper cenocladum (Ant piper) protein is NAD(P)H-quinone oxidoreductase subunit 3, chloroplastic.